We begin with the raw amino-acid sequence, 874 residues long: Probable inorganic carbon transporter subunit DabA (874 aa).

4 residues coordinate Zn(2+): Cys-398, Asp-400, His-580, and Cys-595.

The protein belongs to the inorganic carbon transporter (TC 9.A.2) DabA family. Forms a complex with DabB. It depends on Zn(2+) as a cofactor.

The protein localises to the cell membrane. Part of an energy-coupled inorganic carbon pump. The chain is Probable inorganic carbon transporter subunit DabA from Bacillus cereus (strain ZK / E33L).